A 262-amino-acid chain; its full sequence is Acyl-[acyl-carrier-protein]--UDP-N-acetylglucosamine O-acyltransferase (262 aa).

Belongs to the transferase hexapeptide repeat family. LpxA subfamily. As to quaternary structure, homotrimer.

The protein localises to the cytoplasm. The catalysed reaction is a (3R)-hydroxyacyl-[ACP] + UDP-N-acetyl-alpha-D-glucosamine = a UDP-3-O-[(3R)-3-hydroxyacyl]-N-acetyl-alpha-D-glucosamine + holo-[ACP]. It functions in the pathway glycolipid biosynthesis; lipid IV(A) biosynthesis; lipid IV(A) from (3R)-3-hydroxytetradecanoyl-[acyl-carrier-protein] and UDP-N-acetyl-alpha-D-glucosamine: step 1/6. In terms of biological role, involved in the biosynthesis of lipid A, a phosphorylated glycolipid that anchors the lipopolysaccharide to the outer membrane of the cell. The protein is Acyl-[acyl-carrier-protein]--UDP-N-acetylglucosamine O-acyltransferase of Shigella boydii serotype 18 (strain CDC 3083-94 / BS512).